Here is a 1719-residue protein sequence, read N- to C-terminus: Chromodomain-helicase-DNA-binding protein 1 (1719 aa).

Basic and acidic residues predominate over residues 1 to 10 (MNGHSDEESV). The disordered stretch occupies residues 1–249 (MNGHSDEESV…EAEETKTDSD (249 aa)). Low complexity predominate over residues 34-62 (SSGSSSDGSSSQSGSSDSESGSESGSQSE). Over residues 66–85 (DTSREKKQVQAKPPKADGSE) the composition is skewed to basic and acidic residues. A compositionally biased stretch (low complexity) spans 103-116 (KKQQQQQKAASSDS). Residues 117 to 133 (GSEEDSSSSEDSADDSS) show a composition bias toward acidic residues. A compositionally biased stretch (low complexity) spans 149–160 (SGSGSVSGTGSD). The span at 161–178 (SESEEDGDKSSCEESESD) shows a compositional bias: acidic residues. Positions 184–207 (KVKSRKPPSRIKPKSGKKSTGQKK) are enriched in basic residues. The segment covering 212–222 (SSEEEEDDDED) has biased composition (acidic residues). Positions 239-248 (KEAEETKTDS) are enriched in basic and acidic residues. 2 Chromo domains span residues 268-360 (ETIE…RWLK) and 385-448 (QIVE…TPFK). Residues 489–659 (AHSWCKGNSC…WSLLHFIMPE (171 aa)) enclose the Helicase ATP-binding domain. 502-509 (DEMGLGKT) contributes to the ATP binding site. Positions 610–613 (DEAH) match the DEAH box motif. Residues 788 to 939 (LLDKLLIRLR…HLVIQRMDTT (152 aa)) form the Helicase C-terminal domain. Disordered regions lie at residues 1076 to 1116 (ISFN…TIPR), 1319 to 1393 (QRLA…TPVH), and 1503 to 1719 (KKRQ…SRKT). Composition is skewed to basic residues over residues 1103–1113 (KRPKKRGRPRT) and 1327–1342 (SKRRKTRNKKNKMKAS). The span at 1369-1380 (NKVNEIKSENKE) shows a compositional bias: basic and acidic residues. The interval 1410–1512 (LDQKTFSVCK…KKRQESQQHN (103 aa)) is CHD1 helical C-terminal domain (CHCT). A compositionally biased stretch (polar residues) spans 1511-1524 (HNDQNISSNVNTHV). Basic and acidic residues-rich tracts occupy residues 1526–1576 (RNPD…DSRK), 1585–1673 (GKDH…DHRA), and 1698–1710 (SPFEHSSDHKSTP).

The protein belongs to the SNF2/RAD54 helicase family. Component of the SAGA complex. Interacts with SSRP1.

Its subcellular location is the nucleus. The protein resides in the chromosome. It localises to the centromere. The catalysed reaction is ATP + H2O = ADP + phosphate + H(+). ATP-dependent chromatin-remodeling factor which functions as substrate recognition component of the transcription regulatory histone acetylation (HAT) complex SAGA. Regulates polymerase II transcription. Also required for efficient transcription by RNA polymerase I, and more specifically the polymerase I transcription termination step. Regulates negatively DNA replication. Not only involved in transcription-related chromatin remodeling, but also required to maintain a specific chromatin configuration across the genome. Required for maintaining open chromatin and pluripotency in embryonic stem cells. Required for centromeric localization of CENPA. The protein is Chromodomain-helicase-DNA-binding protein 1 (CHD1) of Gallus gallus (Chicken).